The primary structure comprises 358 residues: DNA replication and repair protein RecF (358 aa).

33–40 (GENGAGKT) provides a ligand contact to ATP.

The protein belongs to the RecF family.

It localises to the cytoplasm. In terms of biological role, the RecF protein is involved in DNA metabolism; it is required for DNA replication and normal SOS inducibility. RecF binds preferentially to single-stranded, linear DNA. It also seems to bind ATP. This Deinococcus geothermalis (strain DSM 11300 / CIP 105573 / AG-3a) protein is DNA replication and repair protein RecF.